The primary structure comprises 1579 residues: Pentafunctional AROM polypeptide (1579 aa).

Positions 1-391 are 3-dehydroquinate synthase; that stretch reads MKVELSKVPI…YGTSAHVVSD (391 aa). NAD(+)-binding positions include 44 to 46, 79 to 82, 110 to 112, and Asp-115; these read DTN, EAHK, and GGV. 7-phospho-2-dehydro-3-deoxy-D-arabino-heptonate is bound at residue Arg-126. An NAD(+)-binding site is contributed by 135-136; the sequence is TS. 7-phospho-2-dehydro-3-deoxy-D-arabino-heptonate-binding residues include Asp-142 and Lys-148. Lys-157 provides a ligand contact to NAD(+). Asn-158 is a binding site for 7-phospho-2-dehydro-3-deoxy-D-arabino-heptonate. Residues 175–178 and Asn-186 each bind NAD(+); that span reads WLET. Glu-190 contributes to the Zn(2+) binding site. Residues 190–193 and Lys-257 contribute to the 7-phospho-2-dehydro-3-deoxy-D-arabino-heptonate site; that span reads EVIK. Glu-267 functions as the Proton acceptor; for 3-dehydroquinate synthase activity in the catalytic mechanism. 7-phospho-2-dehydro-3-deoxy-D-arabino-heptonate-binding positions include 271-275 and His-278; that span reads RNLLN. His-278 serves as a coordination point for Zn(2+). Residue His-282 is the Proton acceptor; for 3-dehydroquinate synthase activity of the active site. 7-phospho-2-dehydro-3-deoxy-D-arabino-heptonate is bound by residues His-294 and Lys-363. A Zn(2+)-binding site is contributed by His-294. Residues 404–862 are EPSP synthase; it reads VYPFKTLENG…WDVLHTQLGA (459 aa). Cys-844 acts as the For EPSP synthase activity in catalysis. A shikimate kinase region spans residues 881-1070; that stretch reads SIVIIGMRAA…IPTNRSSFVC (190 aa). An ATP-binding site is contributed by 886 to 893; sequence GMRAAGKT. The tract at residues 1071–1283 is 3-dehydroquinase; the sequence is LTFDDLAAHK…SAPGQLTLSQ (213 aa). His-1188 acts as the Proton acceptor; for 3-dehydroquinate dehydratase activity in catalysis. The active-site Schiff-base intermediate with substrate; for 3-dehydroquinate dehydratase activity is the Lys-1217. Residues 1296–1579 are shikimate dehydrogenase; the sequence is AKNFYVVGSP…IYSAVTEEQA (284 aa).

The protein in the N-terminal section; belongs to the sugar phosphate cyclases superfamily. Dehydroquinate synthase family. This sequence in the 2nd section; belongs to the EPSP synthase family. In the 3rd section; belongs to the shikimate kinase family. It in the 4th section; belongs to the type-I 3-dehydroquinase family. The protein in the C-terminal section; belongs to the shikimate dehydrogenase family. In terms of assembly, homodimer. Zn(2+) is required as a cofactor.

Its subcellular location is the cytoplasm. The catalysed reaction is 7-phospho-2-dehydro-3-deoxy-D-arabino-heptonate = 3-dehydroquinate + phosphate. It catalyses the reaction 3-dehydroquinate = 3-dehydroshikimate + H2O. It carries out the reaction shikimate + NADP(+) = 3-dehydroshikimate + NADPH + H(+). The enzyme catalyses shikimate + ATP = 3-phosphoshikimate + ADP + H(+). The catalysed reaction is 3-phosphoshikimate + phosphoenolpyruvate = 5-O-(1-carboxyvinyl)-3-phosphoshikimate + phosphate. Its pathway is metabolic intermediate biosynthesis; chorismate biosynthesis; chorismate from D-erythrose 4-phosphate and phosphoenolpyruvate: step 2/7. It participates in metabolic intermediate biosynthesis; chorismate biosynthesis; chorismate from D-erythrose 4-phosphate and phosphoenolpyruvate: step 3/7. The protein operates within metabolic intermediate biosynthesis; chorismate biosynthesis; chorismate from D-erythrose 4-phosphate and phosphoenolpyruvate: step 4/7. It functions in the pathway metabolic intermediate biosynthesis; chorismate biosynthesis; chorismate from D-erythrose 4-phosphate and phosphoenolpyruvate: step 5/7. Its pathway is metabolic intermediate biosynthesis; chorismate biosynthesis; chorismate from D-erythrose 4-phosphate and phosphoenolpyruvate: step 6/7. In terms of biological role, the AROM polypeptide catalyzes 5 consecutive enzymatic reactions in prechorismate polyaromatic amino acid biosynthesis. The sequence is that of Pentafunctional AROM polypeptide from Lachancea thermotolerans (strain ATCC 56472 / CBS 6340 / NRRL Y-8284) (Yeast).